We begin with the raw amino-acid sequence, 461 residues long: CBL-interacting protein kinase 1 (461 aa).

In terms of domain architecture, Protein kinase spans 19–274; the sequence is YEIGRTLGEG…IAGIKEHEWF (256 aa). Residues 25 to 33 and lysine 48 each bind ATP; that span reads LGEGNFGKV. Aspartate 142 serves as the catalytic Proton acceptor. The interval 160–189 is activation loop; that stretch reads DFGLSALPQHLGNDGLLHTTCGSPNYIAPE. An NAF domain is found at 308–332; sequence EKPTHINAFQLIGMASALDLSGFFE. Positions 338 to 367 are PPI; it reads QRKIRFTSTHSPKDLFDKIENVVTEMGFQV.

The protein belongs to the protein kinase superfamily. CAMK Ser/Thr protein kinase family. SNF1 subfamily. It depends on Mn(2+) as a cofactor.

It catalyses the reaction L-seryl-[protein] + ATP = O-phospho-L-seryl-[protein] + ADP + H(+). The catalysed reaction is L-threonyl-[protein] + ATP = O-phospho-L-threonyl-[protein] + ADP + H(+). In terms of biological role, CIPK serine-threonine protein kinases interact with CBL proteins. Binding of a CBL protein to the regulatory NAF domain of CIPK protein lead to the activation of the kinase in a calcium-dependent manner. This chain is CBL-interacting protein kinase 1 (CIPK1), found in Oryza sativa subsp. japonica (Rice).